A 475-amino-acid polypeptide reads, in one-letter code: ATP synthase subunit beta (475 aa).

152-159 (GGAGVGKT) lines the ATP pocket.

It belongs to the ATPase alpha/beta chains family. F-type ATPases have 2 components, CF(1) - the catalytic core - and CF(0) - the membrane proton channel. CF(1) has five subunits: alpha(3), beta(3), gamma(1), delta(1), epsilon(1). CF(0) has three main subunits: a(1), b(2) and c(9-12). The alpha and beta chains form an alternating ring which encloses part of the gamma chain. CF(1) is attached to CF(0) by a central stalk formed by the gamma and epsilon chains, while a peripheral stalk is formed by the delta and b chains.

It is found in the cell inner membrane. It catalyses the reaction ATP + H2O + 4 H(+)(in) = ADP + phosphate + 5 H(+)(out). Functionally, produces ATP from ADP in the presence of a proton gradient across the membrane. The catalytic sites are hosted primarily by the beta subunits. The protein is ATP synthase subunit beta of Wolbachia sp. subsp. Drosophila simulans (strain wRi).